The primary structure comprises 179 residues: UPF0134 protein MPN_145 (179 aa).

This sequence belongs to the UPF0134 family.

This chain is UPF0134 protein MPN_145, found in Mycoplasma pneumoniae (strain ATCC 29342 / M129 / Subtype 1) (Mycoplasmoides pneumoniae).